A 662-amino-acid chain; its full sequence is ATP-dependent zinc metalloprotease FtsH (662 aa).

Residues 1–15 (MSENPVKRPGKDGSR) show a composition bias toward basic and acidic residues. Residues 1–35 (MSENPVKRPGKDGSRNKFKPVQEEGGTPGWFRSKG) are disordered. Topologically, residues 1 to 39 (MSENPVKRPGKDGSRNKFKPVQEEGGTPGWFRSKGESPQ) are cytoplasmic. A helical membrane pass occupies residues 40–60 (GKFPGFLLFLMAGLLMLFVFL). Over 61-154 (RFFSGTDAPE…LKVEKGSSDL (94 aa)) the chain is Periplasmic. The chain crosses the membrane as a helical span at residues 155 to 175 (NTFLALFAPWIIFAALYFFLF). The Cytoplasmic segment spans residues 176–662 (RRMSGQNGAQ…QGALPNPVTA (487 aa)). 250–257 (GPPGTGKT) contacts ATP. Residue H472 participates in Zn(2+) binding. Residue E473 is part of the active site. H476 and D548 together coordinate Zn(2+).

The protein in the central section; belongs to the AAA ATPase family. In the C-terminal section; belongs to the peptidase M41 family. As to quaternary structure, homohexamer. Requires Zn(2+) as cofactor.

The protein resides in the cell inner membrane. In terms of biological role, acts as a processive, ATP-dependent zinc metallopeptidase for both cytoplasmic and membrane proteins. Plays a role in the quality control of integral membrane proteins. This Pelodictyon phaeoclathratiforme (strain DSM 5477 / BU-1) protein is ATP-dependent zinc metalloprotease FtsH.